We begin with the raw amino-acid sequence, 660 residues long: Nuclear factor erythroid 2-related factor 3 (660 aa).

Residues 120-214 are disordered; sequence SAVGDGGQSA…KTEEHKMACA (95 aa). Over residues 123-135 the composition is skewed to gly residues; sequence GDGGQSASAGGGD. 2 stretches are compositionally biased toward basic and acidic residues: residues 173 to 186 and 204 to 214; these read MLREKSEAVDHSSQ and SKTEEHKMACA. One can recognise a bZIP domain in the interval 541-604; it reads LIRDIRRRGK…DIMRQKLHGL (64 aa). The segment at 543–562 is basic motif; that stretch reads RDIRRRGKNKVAAQNCRKRK. A leucine-zipper region spans residues 566-573; that stretch reads ILNLEDDI.

The protein belongs to the bZIP family. CNC subfamily. In terms of assembly, heterodimer with MAFG, MAFK and other small MAF proteins that binds to the MAF recognition elements (MARE). As to expression, high level expression in brain, thymus, testis and placenta. Medium level expression in uterus, stomach and lung. Low level expression in kidney. No expression in heart, liver, spleen and ovary.

It localises to the nucleus. In terms of biological role, activates erythroid-specific, globin gene expression. The sequence is that of Nuclear factor erythroid 2-related factor 3 (Nfe2l3) from Mus musculus (Mouse).